Here is a 161-residue protein sequence, read N- to C-terminus: Transcriptional regulator MraZ (161 aa).

SpoVT-AbrB domains lie at 7–55 and 84–127; these read RYTN…GPAF and SAEL…EPGA.

The protein belongs to the MraZ family. Forms oligomers.

It is found in the cytoplasm. It localises to the nucleoid. The sequence is that of Transcriptional regulator MraZ from Parvibaculum lavamentivorans (strain DS-1 / DSM 13023 / NCIMB 13966).